We begin with the raw amino-acid sequence, 329 residues long: HTH-type transcriptional regulator ArgR (329 aa).

Residues 214-312 (TQAVLLMEAN…GVTPREDRNQ (99 aa)) enclose the HTH araC/xylS-type domain. DNA-binding regions (H-T-H motif) lie at residues 231–252 (DEIA…KQYL) and 279–302 (IIQI…RNFF). The tract at residues 307 to 329 (REDRNQRRGGSAFETTFTPVERG) is disordered. Residues 319 to 329 (FETTFTPVERG) show a composition bias toward polar residues.

Functionally, argR could be a transcriptional activator of the dauBAR operon in response to the presence of L-Arg. This is HTH-type transcriptional regulator ArgR (argR) from Pseudomonas aeruginosa (strain ATCC 15692 / DSM 22644 / CIP 104116 / JCM 14847 / LMG 12228 / 1C / PRS 101 / PAO1).